The chain runs to 976 residues: 3-O-beta-L-arabinopyranosyl-alpha-L-arabinofuranosidase (976 aa).

Residues 1–28 (MSHRNKALVAIVAGTALLISSGAAIGQA) form the signal peptide. Glu190 functions as the Proton donor in the catalytic mechanism. Catalysis depends on Glu315, which acts as the Nucleophile. The CBM6 domain maps to 519 to 654 (LLVEEVENTV…DNTLDKFLLY (136 aa)).

It belongs to the glycosyl hydrolase 39 family.

Its subcellular location is the secreted. The enzyme catalyses Hydrolysis of beta-L-Arap-(1-&gt;3)-L-Araf disaccharides from non-reducing terminals in branches of type II arabinogalactan attached to proteins.. Its function is as follows. Hydrolase involved in the degradation of the gum arabic arabinogalactan protein (AGP) and larch AGP. Catalyzes the release of 3-O-beta-L-arabinopyranosyl-L-arabinose (beta-L-Arap-(1-&gt;3)-L-Ara) from gum arabic AGP and larch AGP. Also cleaves a small amount of beta-L-Arap-(1-&gt;3)-L-Ara from sugar beet arabinan, but wheat AGP cannot be used as a substrate. Can also release 3-O-alpha-D-galactopyranosyl-L-arabinose (alpha-D-Galp-(1-&gt;3)-L-Ara) from gum arabic AGP, with low efficiency. The protein is 3-O-beta-L-arabinopyranosyl-alpha-L-arabinofuranosidase of Bifidobacterium pseudocatenulatum.